The chain runs to 274 residues: MRGSGRASSAITIVNAFATGKGAAIGIELWTEARVRVTGDGEVRGKIVVKGEEFKDYRLVNSVISVLREVTGEPFGVRFEIHSDIPVGKGLKSSSAAANSLTKALVEALRLNIDDLSIVKLGVEAAKRAGVTITGAFDDACASYFGGLCITDNYEMEILVKREINPETVVLLIPRETVLTESLKGVDFSKISPFIGEALRLAISGEWKKALVINGLLYSTFLGYDLAPMREALKLGAFVGLCGKGPAFFAIADEPEEIIEAWSSFGDVIATSLR.

86–96 (PVGKGLKSSSA) is a binding site for ATP.

Belongs to the GHMP kinase family. Archaeal shikimate kinase subfamily.

The protein resides in the cytoplasm. The enzyme catalyses shikimate + ATP = 3-phosphoshikimate + ADP + H(+). It functions in the pathway metabolic intermediate biosynthesis; chorismate biosynthesis; chorismate from D-erythrose 4-phosphate and phosphoenolpyruvate: step 5/7. The chain is Shikimate kinase (aroK) from Pyrococcus abyssi (strain GE5 / Orsay).